The primary structure comprises 117 residues: uncharacterized protein (117 aa).

This is an uncharacterized protein from Acidianus two-tailed virus (ATV).